A 151-amino-acid polypeptide reads, in one-letter code: Deoxyuridine 5'-triphosphate nucleotidohydrolase (151 aa).

Residues 70 to 72 (RSG), asparagine 83, 87 to 89 (LID), and methionine 97 contribute to the substrate site.

This sequence belongs to the dUTPase family. Requires Mg(2+) as cofactor.

It carries out the reaction dUTP + H2O = dUMP + diphosphate + H(+). It participates in pyrimidine metabolism; dUMP biosynthesis; dUMP from dCTP (dUTP route): step 2/2. In terms of biological role, this enzyme is involved in nucleotide metabolism: it produces dUMP, the immediate precursor of thymidine nucleotides and it decreases the intracellular concentration of dUTP so that uracil cannot be incorporated into DNA. This chain is Deoxyuridine 5'-triphosphate nucleotidohydrolase, found in Pseudomonas putida (strain W619).